We begin with the raw amino-acid sequence, 132 residues long: N,N-dimethylformamidase alpha subunit (132 aa).

As to quaternary structure, heterotetramer of two DmfA1 (alpha) and two DmfA2 (beta) subunits.

The enzyme catalyses N,N-dimethylformamide + H2O = dimethylamine + formate. Activity is slightly inhibited by Mg(2+) and Mn(2+), and slightly increased by Cu(2+). Activity is slightly inhibited by the chelating agents 8-hydroxyquinoline, ethylenediaminetetraacetate, o-phenanthroline and 2,2'-bipyridyl. Functionally, hydrolyzes N,N-dimethylformamide, and to a lesser extent N,N-dimethylacetamide and N,N-diethylacetamide. Has no activity against the substituted amides N-methylformamide, N-ethylformamide, N-ethylformamide and N-methylacetamide or the unsubstituted amides formamide, nicotinamide, acetoamide, benzamide, acetamide and acrylamide. This chain is N,N-dimethylformamidase alpha subunit, found in Alcaligenes sp.